The chain runs to 278 residues: HTH-type transcriptional regulator HdfR (278 aa).

Residues 1–58 (MDTELLKTFLEVSRTRHFGRAAEALYLTQSAVSFRIRQLENQLGVNLFTRHRNNIRLT) enclose the HTH lysR-type domain. Residues 18–37 (FGRAAEALYLTQSAVSFRIR) constitute a DNA-binding region (H-T-H motif).

Belongs to the LysR transcriptional regulatory family.

Its function is as follows. Negatively regulates the transcription of the flagellar master operon flhDC by binding to the upstream region of the operon. The polypeptide is HTH-type transcriptional regulator HdfR (Salmonella dublin (strain CT_02021853)).